A 296-amino-acid chain; its full sequence is MDSLEARLQFIQVLKNLQKTLHKTRDSITSSSTTTPPSSQQKLNNDPIQFYLRNYRHHYEDFHQCLFDTTMKMDPLDRLDVVIYYVRIIRNLYPHSHSNTNVTKVLNEVLLMDIDLVFELCLPCQDWKSLTNQATCKELFLDLSKLIHYDATSVTHTPSDTTLIDATTWYSVKTERTTKDYKESLQRTESLLKDRDLKKLAFFQQFNSDTTAINPDLQTQPTNANILLHRMEADRELHKRSKETSWYIERPSNDILDESEFKSLWTHFETTDSGFDKDDYKNIKALNDIAKASYIY.

Residues 25–44 (RDSITSSSTTTPPSSQQKLN) form a disordered region. The span at 29–39 (TSSSTTTPPSS) shows a compositional bias: low complexity. T35 is subject to Phosphothreonine.

It belongs to the CTK3 family. In terms of assembly, CTDK-I consists of three subunits, CTK1, CTK2 and CTK3 (also called alpha, beta and gamma). Interacts with CTK1. Heterodimerization with CTK2 is required to protect this subunit from degradation. In terms of processing, ubiquitinated. Ubiquitination leads to degradation by the 26S proteasome pathway.

The protein resides in the nucleus. It is found in the nucleolus. Its subcellular location is the cytoplasm. Its function is as follows. Gamma subunit of the CTDK-I complex, which hyperphosphorylates the C-terminal heptapeptide repeat domain (CTD) of the largest RNA polymerase II subunit. CTDK-I phosphorylates 'Ser-5' if the CTD substrate is not phosphorylated at 'Ser-5', but will phosphorylate 'Ser-2' of a CTD substrate if 'Ser-5' is already phosphorylated. CTDK-I is also more reactive toward substrates that are prephosphorylated at 'Ser-2' or 'Ser-5' compared with an unphosphorylated CTD substrate, therefore efficiently creating doubly phosphorylated CTD repeats. Involved in RNA polymerase I transcription and RNA polymerase II transcriptional elongation, and as part of the CTDK-I complex, pre-mRNA 3'-end processing and SET2 mediated H3K36 methylation. Together with CTK2, required for CTK1 CTD kinase activation. Required for DNA damage induced transcription. Involved in the adaptation to alternative carbon sources, including galactose, glycerol and ethanol, but not raffinose. Required for the integrity of the rDNA locus. The sequence is that of CTD kinase subunit gamma (CTK3) from Saccharomyces cerevisiae (strain ATCC 204508 / S288c) (Baker's yeast).